The primary structure comprises 250 residues: Proteasome subunit alpha (250 aa).

It belongs to the peptidase T1A family. In terms of assembly, the 20S proteasome core is composed of 14 alpha and 14 beta subunits that assemble into four stacked heptameric rings, resulting in a barrel-shaped structure. The two inner rings, each composed of seven catalytic beta subunits, are sandwiched by two outer rings, each composed of seven alpha subunits. The catalytic chamber with the active sites is on the inside of the barrel. Has a gated structure, the ends of the cylinder being occluded by the N-termini of the alpha-subunits. Is capped at one or both ends by the proteasome regulatory ATPase, PAN.

The protein localises to the cytoplasm. Its activity is regulated as follows. The formation of the proteasomal ATPase PAN-20S proteasome complex, via the docking of the C-termini of PAN into the intersubunit pockets in the alpha-rings, triggers opening of the gate for substrate entry. Interconversion between the open-gate and close-gate conformations leads to a dynamic regulation of the 20S proteasome proteolysis activity. Functionally, component of the proteasome core, a large protease complex with broad specificity involved in protein degradation. In Methanobrevibacter smithii (strain ATCC 35061 / DSM 861 / OCM 144 / PS), this protein is Proteasome subunit alpha.